The chain runs to 230 residues: Somatolactin (230 aa).

Positions 1–23 (MMTAVKQSGVWAVLLWPYLLAVS) are cleaved as a signal peptide. Disulfide bonds link C28/C38, C88/C204, and C221/C229. N34 and N144 each carry an N-linked (GlcNAc...) asparagine glycan.

Belongs to the somatotropin/prolactin family. As to expression, pituitary gland.

It localises to the secreted. The sequence is that of Somatolactin from Solea senegalensis (Senegalese sole).